Consider the following 330-residue polypeptide: Aspartate--ammonia ligase (330 aa).

This sequence belongs to the class-II aminoacyl-tRNA synthetase family. AsnA subfamily.

The protein localises to the cytoplasm. The catalysed reaction is L-aspartate + NH4(+) + ATP = L-asparagine + AMP + diphosphate + H(+). It functions in the pathway amino-acid biosynthesis; L-asparagine biosynthesis; L-asparagine from L-aspartate (ammonia route): step 1/1. This chain is Aspartate--ammonia ligase, found in Salmonella agona (strain SL483).